Consider the following 1906-residue polypeptide: Serine protease/ABC transporter B family protein tagB (1906 aa).

A signal peptide spans 1-31 (MKFQFSSPSKIFLFSSVILILIFIGIKFELL). The tract at residues 96-134 (INNNNNNNNKLNNNNNNNNNNNNNNNNNNNNNNNNNNNN) is disordered. The 408-residue stretch at 356–763 (PTVIFGTKDK…ASSTNPSNAI (408 aa)) folds into the Peptidase S8 domain. Catalysis depends on charge relay system residues aspartate 387 and histidine 432. N-linked (GlcNAc...) asparagine glycans are attached at residues asparagine 594, asparagine 621, and asparagine 672. Serine 695 functions as the Charge relay system in the catalytic mechanism. Asparagine 747 and asparagine 823 each carry an N-linked (GlcNAc...) asparagine glycan. Helical transmembrane passes span 1011–1031 (YIII…LMWI), 1076–1096 (FIIE…ASIL), and 1121–1141 (FIII…GSWI). The 284-residue stretch at 1080–1363 (LTIATACSLV…LFGVYVSYIQ (284 aa)) folds into the ABC transmembrane type-1 domain. Asparagine 1172 is a glycosylation site (N-linked (GlcNAc...) asparagine). 3 helical membrane passes run 1210-1230 (LVFI…AVPI), 1309-1329 (WLLI…LVIQ), and 1332-1352 (FTVG…DASS). Residues 1385 to 1455 (LEEEEADRLA…NNNNNIGNLD (71 aa)) form a disordered region. Gly residues predominate over residues 1396–1405 (LSGGGGGGGD). Residues 1407 to 1420 (GDDKKDKQNIENGK) show a composition bias toward basic and acidic residues. Residues 1518-1756 (IEFKNVSFRY…KGKYYRMFSE (239 aa)) form the ABC transporter domain. N-linked (GlcNAc...) asparagine glycosylation is present at asparagine 1522. 1553-1560 (GPSGSGKS) contacts ATP. An N-linked (GlcNAc...) asparagine glycan is attached at asparagine 1658. The segment at 1757–1906 (DKDDTPLQNN…QMDEENDEER (150 aa)) is disordered. Low complexity-rich tracts occupy residues 1765–1779 (NNNN…NNNN) and 1814–1871 (EQQE…DYDQ). Pro residues predominate over residues 1872–1886 (VPPPPPLPSESPSPP).

It in the C-terminal section; belongs to the ABC transporter superfamily. ABCB family. Multidrug resistance exporter (TC 3.A.1.201) subfamily. The protein in the N-terminal section; belongs to the peptidase S8 family.

Its subcellular location is the membrane. In terms of biological role, intercellular communication via tagB may mediate integration of cellular differentiation with morphogenesis. This Dictyostelium discoideum (Social amoeba) protein is Serine protease/ABC transporter B family protein tagB (tagB).